A 476-amino-acid chain; its full sequence is Glutamyl-tRNA(Gln) amidotransferase subunit A (476 aa).

Residues lysine 70 and serine 145 each act as charge relay system in the active site. Serine 169 (acyl-ester intermediate) is an active-site residue.

Belongs to the amidase family. GatA subfamily. In terms of assembly, heterotrimer of A, B and C subunits.

The catalysed reaction is L-glutamyl-tRNA(Gln) + L-glutamine + ATP + H2O = L-glutaminyl-tRNA(Gln) + L-glutamate + ADP + phosphate + H(+). Its function is as follows. Allows the formation of correctly charged Gln-tRNA(Gln) through the transamidation of misacylated Glu-tRNA(Gln) in organisms which lack glutaminyl-tRNA synthetase. The reaction takes place in the presence of glutamine and ATP through an activated gamma-phospho-Glu-tRNA(Gln). This is Glutamyl-tRNA(Gln) amidotransferase subunit A from Methanosarcina acetivorans (strain ATCC 35395 / DSM 2834 / JCM 12185 / C2A).